A 144-amino-acid polypeptide reads, in one-letter code: NADH-ubiquinone oxidoreductase chain 6 (144 aa).

The next 5 helical transmembrane spans lie at 1 to 21 (MVKVFFVLAVLSSIISYINID), 25 to 45 (SSFFLIFSLLFSMPVISMSMH), 46 to 66 (IWFSYFICLLFLSGIFVILVY), 79 to 99 (YMAVFLLLLSMLYFSPTVLTY), and 108 to 128 (FYYSIYWFIFCFILVCLLFFM).

The protein belongs to the complex I subunit 6 family.

Its subcellular location is the mitochondrion membrane. It carries out the reaction a ubiquinone + NADH + 5 H(+)(in) = a ubiquinol + NAD(+) + 4 H(+)(out). Core subunit of the mitochondrial membrane respiratory chain NADH dehydrogenase (Complex I) that is believed to belong to the minimal assembly required for catalysis. Complex I functions in the transfer of electrons from NADH to the respiratory chain. The immediate electron acceptor for the enzyme is believed to be ubiquinone. The chain is NADH-ubiquinone oxidoreductase chain 6 from Caenorhabditis elegans.